The chain runs to 790 residues: Lon protease 2 (790 aa).

The Lon N-terminal domain occupies 18 to 210 (LRILPLRNMV…HVTFYMTRQL (193 aa)). 362–369 (GPPGVGKT) contacts ATP. One can recognise a Lon proteolytic domain in the interval 598 to 779 (SWGCGIATGL…SDVLQLALLP (182 aa)). Active-site residues include serine 685 and lysine 728.

The protein belongs to the peptidase S16 family. Homohexamer. Organized in a ring with a central cavity.

It is found in the cytoplasm. It carries out the reaction Hydrolysis of proteins in presence of ATP.. Functionally, ATP-dependent serine protease that mediates the selective degradation of mutant and abnormal proteins as well as certain short-lived regulatory proteins. Required for cellular homeostasis and for survival from DNA damage and developmental changes induced by stress. Degrades polypeptides processively to yield small peptide fragments that are 5 to 10 amino acids long. Binds to DNA in a double-stranded, site-specific manner. The chain is Lon protease 2 from Syntrophobacter fumaroxidans (strain DSM 10017 / MPOB).